The chain runs to 630 residues: Vacuolar protein 8 (630 aa).

G2 carries N-myristoyl glycine lipidation. ARM repeat units lie at residues 74-115, 117-156, 158-197, 199-238, 242-281, 283-322, 324-364, 408-447, and 456-495; these read EITE…NLAV, AENKLLVVSLGGLEPLIRQMLSPNVEVQCNAVGCITNLAT, DENKTQIAKSGALVPLTRLAKSKDMRVQRNATGALLNMTH, DENRQQLVAAGAIPVLVSLLNSPDTDVQYYCTTALSNIAV, NRKKLAQSEPKLVQSLVQLMDSQSLKVQCQAALALRNLAS, SKYQLEIVKFGGLKPLLRLLHSSYLPLILSAAACVRNVSI, PANE…NLAA, DDLKPQLLEMGICEVLIPLTNSPSVEVQGNSAAALGNLSS, and FNAVWNKPDGGLHAYLVRFLSSADITFQHIAVWTIVQLLE. Disordered regions lie at residues 519 to 558 and 572 to 630; these read AKSPPPSRAGGAPRHDPNDPSAGSSEDEFEDGLTDQEGEG and EVGE…GRDR. The span at 543 to 558 shows a compositional bias: acidic residues; that stretch reads SEDEFEDGLTDQEGEG. The span at 598 to 607 shows a compositional bias: polar residues; that stretch reads GQGQTSQVGS.

It belongs to the beta-catenin family.

It localises to the vacuole membrane. Functionally, functions in both vacuole inheritance and protein targeting from the cytoplasm to vacuole. The protein is Vacuolar protein 8 (VAC8) of Cryptococcus neoformans var. neoformans serotype D (strain B-3501A) (Filobasidiella neoformans).